The primary structure comprises 945 residues: MLPLSAALQTQAQNIVQRFQETQGADCALSSQELWVLASSDFVCDMLQSQPEWLATLRKQPPVADEWQHYAAWLQDDLEEVRDEAQLMRALRLFRRETLVRIAWAQALGQCSTQETLLQLSGLAETLIVSARDWLYQTCCREWGTPCNAQGVPQPLLILGMGKLGGGELNFSSDIDLIFAYPENGQTQGGRRELDNAQFFTRLGQRLIKALDQQTIDGFVYRVDMRLRPFGDSGPLVMSFAALEDYYQEQGRDWERYAMVKARLMGGSEDAYSEELRKTLRPFVFRRYIDFSVIQSLRNMKGMIAREVRRRGLKDNIKLGAGGIREIEFITQVFQLIRGGREPALQGRSLLPTLQAVGELGLLEPQQVQAMSASYLFLRRLENLLQAIADQQTQTLPQDELDQARLAWGMGFDDWSALLLALDHHMQAVRAVFNDLIGDDSPDVGEDPDYQHYHSLWQDALEENELAPLTPHLDEEARRQMLRTIAEFRHDVDKRTIGPRGRDVLDQLMPRLLAEVCPRQDAPTALLRLTQLLLSIVTRTTYLELLVEYHAALSHLIRLCAASPMVANQLSRYPLLLDELLEPATLYQPVAPDAYRSELRQYLLRVPEDDEEQRLEALRQFKQAQQLRIAAGDISGALPVMKVSDHLTYLAEAIIDTVVQQAWNDMVARYGQPTHLQEREGRGFAVIGYGKLGGWELGYSSDLDLVFILDCPPEVMTDGDRSIDGRQFYLRLAQRVMHLFSTRTSSGILYEVDARLRPSGAAGMLVSTVEAFADYQQSEAWTWEHQALVRARIVHGDPLLHQQFDVIRREILCKPRDLETLKREVREMREKMRNHLGNKQRELFDIKADEGGITDIEFIAQYLVLGYAAAEPRLTRWSDNVRIFELMANYDIMPEEEARALTQAYVTMRDEIHHLALQEHSGKIGNGQFAAEREQVRASWAKWLG.

Residues 1 to 441 are adenylyl removase; the sequence is MLPLSAALQT…VFNDLIGDDS (441 aa). Positions 450-945 are adenylyl transferase; sequence YQHYHSLWQD…VRASWAKWLG (496 aa).

The protein belongs to the GlnE family. The cofactor is Mg(2+).

The enzyme catalyses [glutamine synthetase]-O(4)-(5'-adenylyl)-L-tyrosine + phosphate = [glutamine synthetase]-L-tyrosine + ADP. The catalysed reaction is [glutamine synthetase]-L-tyrosine + ATP = [glutamine synthetase]-O(4)-(5'-adenylyl)-L-tyrosine + diphosphate. Involved in the regulation of glutamine synthetase GlnA, a key enzyme in the process to assimilate ammonia. When cellular nitrogen levels are high, the C-terminal adenylyl transferase (AT) inactivates GlnA by covalent transfer of an adenylyl group from ATP to specific tyrosine residue of GlnA, thus reducing its activity. Conversely, when nitrogen levels are low, the N-terminal adenylyl removase (AR) activates GlnA by removing the adenylyl group by phosphorolysis, increasing its activity. The regulatory region of GlnE binds the signal transduction protein PII (GlnB) which indicates the nitrogen status of the cell. The sequence is that of Bifunctional glutamine synthetase adenylyltransferase/adenylyl-removing enzyme from Serratia proteamaculans (strain 568).